A 170-amino-acid chain; its full sequence is UPF0316 protein CLK_3798 (170 aa).

Transmembrane regions (helical) follow at residues 1–21 (MLSYYAFIFFAKIMEVALMTI) and 36–56 (IIGFIEVTIWLYVTSSVLSGI).

The protein belongs to the UPF0316 family.

Its subcellular location is the cell membrane. This Clostridium botulinum (strain Loch Maree / Type A3) protein is UPF0316 protein CLK_3798.